The primary structure comprises 152 residues: Large ribosomal subunit protein bL9 (152 aa).

Belongs to the bacterial ribosomal protein bL9 family.

Binds to the 23S rRNA. The polypeptide is Large ribosomal subunit protein bL9 (Prochlorococcus marinus (strain NATL2A)).